We begin with the raw amino-acid sequence, 101 residues long: Gastrin (101 aa).

The N-terminal stretch at methionine 1–alanine 21 is a signal peptide. The segment at tryptophan 23–glutamine 101 is disordered. Residues proline 25–glycine 37 show a composition bias toward polar residues. Tyrosine 87 carries the post-translational modification Sulfotyrosine. Phenylalanine 92 carries the phenylalanine amide modification. Basic and acidic residues predominate over residues phenylalanine 92–glutamine 101. At serine 96 the chain carries Phosphoserine. The propeptide occupies serine 96–glutamine 101.

Belongs to the gastrin/cholecystokinin family. Sulfation enhances proteolytic processing, and blocks peptide degradation. Levels of sulfation differ between proteolytically-cleaved gastrins and between tissues. In terms of tissue distribution, abundantly expressed in the stomach and duodenum. Low levels in brain, ovary and pancreas.

The protein localises to the secreted. Its function is as follows. Gastrin stimulates the stomach mucosa to produce and secrete hydrochloric acid and the pancreas to secrete its digestive enzymes. It also stimulates smooth muscle contraction and increases blood circulation and water secretion in the stomach and intestine. The polypeptide is Gastrin (Gast) (Mus musculus (Mouse)).